Here is a 286-residue protein sequence, read N- to C-terminus: Bifunctional protein FolD (286 aa).

Residues 166–168 and I232 each bind NADP(+); that span reads GAS.

This sequence belongs to the tetrahydrofolate dehydrogenase/cyclohydrolase family. As to quaternary structure, homodimer.

The enzyme catalyses (6R)-5,10-methylene-5,6,7,8-tetrahydrofolate + NADP(+) = (6R)-5,10-methenyltetrahydrofolate + NADPH. It carries out the reaction (6R)-5,10-methenyltetrahydrofolate + H2O = (6R)-10-formyltetrahydrofolate + H(+). The protein operates within one-carbon metabolism; tetrahydrofolate interconversion. Its function is as follows. Catalyzes the oxidation of 5,10-methylenetetrahydrofolate to 5,10-methenyltetrahydrofolate and then the hydrolysis of 5,10-methenyltetrahydrofolate to 10-formyltetrahydrofolate. This chain is Bifunctional protein FolD, found in Vibrio cholerae serotype O1 (strain ATCC 39541 / Classical Ogawa 395 / O395).